The primary structure comprises 774 residues: Fe(3+) dicitrate transport protein FecA (774 aa).

The N-terminal stretch at 1–33 (MTPLRVFRKTTPLVNTIRLSLLPLAGLSFSAFA) is a signal peptide. Positions 56–63 (FTLSVDAS) match the TonB box motif. Residues 129–250 (DVFEHAGARD…VGGVVNFVTR (122 aa)) form the TBDR plug domain. Residues 255 to 774 (DFGIEAGVEG…TLYMQGSLKF (520 aa)) enclose the TBDR beta-barrel domain. The short motif at 757–774 (GIYAGQPRTLYMQGSLKF) is the TonB C-terminal box element.

This sequence belongs to the TonB-dependent receptor family. In terms of assembly, interacts (via periplasmic N-terminus) with FecR (via periplasmic C-terminus).

The protein localises to the cell outer membrane. Its function is as follows. FecA is the outer membrane receptor protein in the Fe(3+) dicitrate transport system. The protein is Fe(3+) dicitrate transport protein FecA (fecA) of Escherichia coli (strain K12).